The primary structure comprises 136 residues: Histone H3.3 (136 aa).

A disordered region spans residues 1-42; that stretch reads MARTKQTARKSTGGKAPRKQLASKAARKSAPVSGGVKKPHRY. K5 carries the post-translational modification N6,N6,N6-trimethyllysine; alternate. An N6,N6-dimethyllysine; alternate modification is found at K5. N6-methyllysine; alternate occurs at positions 5 and 10. At K10 the chain carries N6-acetyllysine; alternate. A Phosphoserine modification is found at S11. K15 carries the N6,N6-dimethyllysine; alternate modification. N6-acetyllysine; alternate is present on residues K15, K19, K24, K28, and K37. An N6-methyllysine; alternate mark is found at K19, K24, K28, and K37. K28 and K37 each carry N6,N6,N6-trimethyllysine; alternate. 2 positions are modified to N6,N6-dimethyllysine; alternate: K28 and K37. N6-acetyllysine is present on residues K57 and K65. K80 carries the N6,N6,N6-trimethyllysine; alternate modification. An N6,N6-dimethyllysine; alternate modification is found at K80. K80 carries the post-translational modification N6-methyllysine; alternate.

This sequence belongs to the histone H3 family. In terms of assembly, the nucleosome is a histone octamer containing two molecules each of H2A, H2B, H3 and H4 assembled in one H3-H4 heterotetramer and two H2A-H2B heterodimers. The octamer wraps approximately 147 bp of DNA. Phosphorylated to form H3S10ph. H3S10ph promotes subsequent H3K14ac formation and is required for transcriptional activation through TBP recruitment to the promoters. In terms of processing, mono-, di- and trimethylated by the COMPASS complex to form H3K4me1/2/3. H3K4me activates gene expression by regulating transcription elongation and plays a role in telomere length maintenance. H3K4me enrichment correlates with transcription levels, and occurs in a 5' to 3' gradient with H3K4me3 enrichment at the 5'-end of genes, shifting to H3K4me2 and then H3K4me1. Methylated by SET2 to form H3K36me. H3K36me represses gene expression. Methylated by DOT1 to form H3K79me. H3K79me is required for association of SIR proteins with telomeric regions and for telomeric silencing. The COMPASS-mediated formation of H3K4me2/3 and the DOT1-mediated formation of H3K79me require H2BK123ub1. Post-translationally, acetylation of histone H3 leads to transcriptional activation. H3K14ac formation by GCN5 is promoted by H3S10ph. H3K14ac can also be formed by ESA1. H3K56ac formation occurs predominantly in newly synthesized H3 molecules during G1, S and G2/M of the cell cycle and may be involved in DNA repair.

The protein resides in the nucleus. Its subcellular location is the chromosome. Core component of nucleosome. Nucleosomes wrap and compact DNA into chromatin, limiting DNA accessibility to the cellular machineries which require DNA as a template. Histones thereby play a central role in transcription regulation, DNA repair, DNA replication and chromosomal stability. DNA accessibility is regulated via a complex set of post-translational modifications of histones, also called histone code, and nucleosome remodeling. The polypeptide is Histone H3.3 (HHT3) (Lodderomyces elongisporus (strain ATCC 11503 / CBS 2605 / JCM 1781 / NBRC 1676 / NRRL YB-4239) (Yeast)).